Reading from the N-terminus, the 79-residue chain is U24-theraphotoxin-Cg1a (79 aa).

Residues 1–19 (MRVLFIIAVLALISVGCYA) form the signal peptide. Positions 20-44 (SEMKDRSSRNEVLSAIFAIEEPQER) are excised as a propeptide. 3 disulfides stabilise this stretch: Cys46-Cys61, Cys53-Cys66, and Cys60-Cys73. Trp78 carries the post-translational modification Tryptophan amide.

This sequence belongs to the neurotoxin 10 (Hwtx-1) family. 35 (Jztx-27) subfamily. As to expression, expressed by the venom gland.

The protein localises to the secreted. Its function is as follows. Probable ion channel inhibitor. The sequence is that of U24-theraphotoxin-Cg1a from Chilobrachys guangxiensis (Chinese earth tiger tarantula).